We begin with the raw amino-acid sequence, 360 residues long: Phospho-N-acetylmuramoyl-pentapeptide-transferase (360 aa).

Helical transmembrane passes span 25–45 (RGILSVLTALSLSLWLGPWMI), 73–93 (TMGGALILTAIAISTLLWADL), 97–117 (YVWVVLVVTLLFGAIGWVDDY), 142–162 (IGAAVFLYMTAETPIETTLIV), 167–187 (SVEIQLGIFFVVLTYFVIVGS), 199–219 (GLAIMPTVMVAGALGIFCYLS), 236–256 (AGELIVFCAALVGAGLGFLWF), 263–283 (VFMGDVGALALGAALGTIAVI), 288–308 (IVLFIMGGVFVMETLSVMIQV), and 338–358 (VIVRFWIITVILVLIGLATLK).

This sequence belongs to the glycosyltransferase 4 family. MraY subfamily. It depends on Mg(2+) as a cofactor.

The protein resides in the cell inner membrane. The catalysed reaction is UDP-N-acetyl-alpha-D-muramoyl-L-alanyl-gamma-D-glutamyl-meso-2,6-diaminopimeloyl-D-alanyl-D-alanine + di-trans,octa-cis-undecaprenyl phosphate = di-trans,octa-cis-undecaprenyl diphospho-N-acetyl-alpha-D-muramoyl-L-alanyl-D-glutamyl-meso-2,6-diaminopimeloyl-D-alanyl-D-alanine + UMP. Its pathway is cell wall biogenesis; peptidoglycan biosynthesis. In terms of biological role, catalyzes the initial step of the lipid cycle reactions in the biosynthesis of the cell wall peptidoglycan: transfers peptidoglycan precursor phospho-MurNAc-pentapeptide from UDP-MurNAc-pentapeptide onto the lipid carrier undecaprenyl phosphate, yielding undecaprenyl-pyrophosphoryl-MurNAc-pentapeptide, known as lipid I. The protein is Phospho-N-acetylmuramoyl-pentapeptide-transferase of Pseudomonas aeruginosa (strain LESB58).